The chain runs to 710 residues: DNA ligase (710 aa).

Residues 1–36 (MTSSSPRHADPDENPYVEAPPTDFEPVGALSEDEAT) form a disordered region. NAD(+) is bound by residues 63–67 (DETYD), 111–112 (SI), and E147. The active-site N6-AMP-lysine intermediate is K149. Residues R170, E206, and K353 each contribute to the NAD(+) site. Zn(2+) is bound by residues C444, C447, C460, and C466. The BRCT domain occupies 623–710 (ETGDALDGLT…ERGVAWPPEE (88 aa)). The disordered stretch occupies residues 657-689 (ATSSVSGNTDYLVAGESPGRSKRDDADAEGVPV).

Belongs to the NAD-dependent DNA ligase family. LigA subfamily. Requires Mg(2+) as cofactor. It depends on Mn(2+) as a cofactor.

The catalysed reaction is NAD(+) + (deoxyribonucleotide)n-3'-hydroxyl + 5'-phospho-(deoxyribonucleotide)m = (deoxyribonucleotide)n+m + AMP + beta-nicotinamide D-nucleotide.. Its function is as follows. DNA ligase that catalyzes the formation of phosphodiester linkages between 5'-phosphoryl and 3'-hydroxyl groups in double-stranded DNA using NAD as a coenzyme and as the energy source for the reaction. It is essential for DNA replication and repair of damaged DNA. The polypeptide is DNA ligase (Halorubrum lacusprofundi (strain ATCC 49239 / DSM 5036 / JCM 8891 / ACAM 34)).